Reading from the N-terminus, the 601-residue chain is Invasin CotH3 (601 aa).

Positions 1 to 17 (MKLSIISAAFLVAITHA) are cleaved as a signal peptide. N-linked (GlcNAc...) asparagine glycans are attached at residues Asn28, Asn85, Asn170, Asn324, Asn449, Asn527, Asn541, Asn554, Asn561, and Asn571. Residues 539 to 579 (SANGTTAAAPAPAAGNSTGKGGNQSISSSASSNKTSAQSTS) are compositionally biased toward low complexity. The interval 539–581 (SANGTTAAAPAPAAGNSTGKGGNQSISSSASSNKTSAQSTSGA) is disordered. Ser579 carries GPI-anchor amidated serine lipidation. Residues 580–601 (GASRSKTAPIVLAISALALLVF) constitute a propeptide, removed in mature form.

In terms of assembly, interacts with HSPA5/BiP on the cell surface of host nasal epithelial cells.

It localises to the cell membrane. Promotes invasion of host epithelial cells by adhering to receptors on the host cell surface to facilitate endocytosis of the pathogen into host cells. Binds HSPA5/BiP protein on the cell surface of host nasal epithelial cells. The chain is Invasin CotH3 from Rhizopus delemar (strain RA 99-880 / ATCC MYA-4621 / FGSC 9543 / NRRL 43880) (Mucormycosis agent).